A 166-amino-acid polypeptide reads, in one-letter code: Dihydrofolate reductase (166 aa).

One can recognise a DHFR domain in the interval 6–164 (KISLIVAMDK…YDYYFHIYER (159 aa)). Position 10-12 (10-12 (IVA)) interacts with substrate. NADP(+) is bound by residues 11–12 (VA) and 19–24 (IGKDND). A substrate-binding site is contributed by D32. 48 to 51 (GRKN) contacts NADP(+). R62 contacts substrate. NADP(+) contacts are provided by residues 67–70 (LTRD) and 100–105 (FGGEQI). T119 contributes to the substrate binding site.

Belongs to the dihydrofolate reductase family.

It catalyses the reaction (6S)-5,6,7,8-tetrahydrofolate + NADP(+) = 7,8-dihydrofolate + NADPH + H(+). Its pathway is cofactor biosynthesis; tetrahydrofolate biosynthesis; 5,6,7,8-tetrahydrofolate from 7,8-dihydrofolate: step 1/1. Functionally, key enzyme in folate metabolism. Catalyzes an essential reaction for de novo glycine and purine synthesis, and for DNA precursor synthesis. This Staphylococcus haemolyticus protein is Dihydrofolate reductase (dfrD).